The sequence spans 504 residues: Anaerobic nitric oxide reductase transcription regulator NorR (504 aa).

Position 57 is a 4-aspartylphosphate (aspartate 57). Residues 187–416 (MIGLSPGMTQ…LEHAIHRAVV (230 aa)) form the Sigma-54 factor interaction domain. ATP contacts are provided by residues 215-222 (GETGTGKE) and 278-287 (ADNGTLFLDE). A DNA-binding region (H-T-H motif) is located at residues 479-498 (WAACARMLETDVANLHRLAK).

It functions in the pathway nitrogen metabolism; nitric oxide reduction. Its function is as follows. Required for the expression of anaerobic nitric oxide (NO) reductase, acts as a transcriptional activator for at least the norVW operon. Activation also requires sigma-54. In Escherichia coli O8 (strain IAI1), this protein is Anaerobic nitric oxide reductase transcription regulator NorR.